The chain runs to 525 residues: NADH-quinone oxidoreductase subunit N (525 aa).

The next 14 helical transmembrane spans lie at 26 to 46, 53 to 73, 90 to 110, 143 to 163, 167 to 187, 202 to 222, 246 to 266, 278 to 298, 314 to 334, 341 to 361, 368 to 388, 411 to 431, 449 to 469, and 487 to 507; these read LSPM…DAFA, VLQP…VVLL, PTLF…LLVA, VQTE…LFVA, LLVM…LCGL, YFLL…FAYG, LYLS…AAPF, PTPI…GALL, PVIW…ALTQ, LAYS…GSNI, MFYL…VSLV, LAGT…TSGF, LVVV…RVIV, and PTLT…LGVA.

It belongs to the complex I subunit 2 family. In terms of assembly, NDH-1 is composed of 14 different subunits. Subunits NuoA, H, J, K, L, M, N constitute the membrane sector of the complex.

The protein localises to the cell membrane. The catalysed reaction is a quinone + NADH + 5 H(+)(in) = a quinol + NAD(+) + 4 H(+)(out). Functionally, NDH-1 shuttles electrons from NADH, via FMN and iron-sulfur (Fe-S) centers, to quinones in the respiratory chain. The immediate electron acceptor for the enzyme in this species is believed to be a menaquinone. Couples the redox reaction to proton translocation (for every two electrons transferred, four hydrogen ions are translocated across the cytoplasmic membrane), and thus conserves the redox energy in a proton gradient. This chain is NADH-quinone oxidoreductase subunit N, found in Parafrankia sp. (strain EAN1pec).